Consider the following 92-residue polypeptide: Bombyxin A-4 (92 aa).

A signal peptide spans 1-19 (MKILLAIALMLSTVMWVST). The residue at position 20 (glutamine 20) is a Pyrrolidone carboxylic acid. Disulfide bonds link cysteine 29-cysteine 79, cysteine 41-cysteine 92, and cysteine 78-cysteine 83. The propeptide at 50–70 (SGAQFASYGSAWLMPYSEGRG) is c peptide like.

It belongs to the insulin family. Heterodimer of a B chain and an A chain linked by two disulfide bonds.

The protein resides in the secreted. In terms of biological role, brain peptide responsible for activation of prothoracic glands to produce ecdysone in insects. This is Bombyxin A-4 (BBXA4) from Bombyx mori (Silk moth).